A 350-amino-acid chain; its full sequence is Opsin, longwave 563 nm (350 aa).

The Extracellular segment spans residues 1-45 (HRLAGRHPQDNYEDSTQSSIFTYTNSNSTRGPFEGPNYHIAPRWV). Asparagine 27 is a glycosylation site (N-linked (GlcNAc...) asparagine). Residues 46-70 (YHLTSVWMLFVVVASVFTNGLVLAA) form a helical membrane-spanning segment. Over 71–82 (TMKFKKLRHPLN) the chain is Cytoplasmic. A helical transmembrane segment spans residues 83 to 108 (WILVNLAIADLAETVIASTISVVNQV). Residues 109–122 (HGYFVLGHPMCVLE) lie on the Extracellular side of the membrane. Cysteine 119 and cysteine 196 form a disulfide bridge. A helical membrane pass occupies residues 123–142 (GYTVSLCGITGLWSLAIISW). At 143 to 161 (ERWLVVCKPFGNVRFDAKL) the chain is on the cytoplasmic side. A helical membrane pass occupies residues 162 to 185 (AIVGVAFSWIWSAVWTAPPIFGWS). Over 186-211 (RYWPHGLKTSCGPDVFSGSSYPGVQS) the chain is Extracellular. The helical transmembrane segment at 212–239 (YMIVLMITCCFLPLGIIVLCYLQVWLAI) threads the bilayer. At 240 to 261 (RAVAKQQKESESTQKAEKEVTR) the chain is on the cytoplasmic side. The helical transmembrane segment at 262 to 285 (MVVVMIVAYCVCWGPYTFFACFAA) threads the bilayer. The Extracellular segment spans residues 286–293 (ANPGYAFH). A helical transmembrane segment spans residues 294–318 (PLMAALPAYFAKSATIYNPIIYVFM). An N6-(retinylidene)lysine modification is found at lysine 305. Topologically, residues 319–350 (NRQFRNCILQLFGKKVDDGSELSSASKTEVSS) are cytoplasmic.

Belongs to the G-protein coupled receptor 1 family. Opsin subfamily. Phosphorylated on some or all of the serine and threonine residues present in the C-terminal region. As to expression, the color pigments are found in the cone photoreceptor cells.

Its subcellular location is the membrane. Visual pigments are the light-absorbing molecules that mediate vision. They consist of an apoprotein, opsin, covalently linked to cis-retinal. In Callithrix jacchus (White-tufted-ear marmoset), this protein is Opsin, longwave 563 nm.